The sequence spans 127 residues: Major sperm protein 78 (127 aa).

N-acetylalanine is present on Ala2. The region spanning 9–126 is the MSP domain; sequence DIQTQPGTKI…RRKNLPIEYN (118 aa).

As to expression, sperm.

Its subcellular location is the cell projection. It localises to the pseudopodium. It is found in the cytoplasm. The protein localises to the cytoskeleton. Its function is as follows. Central component in molecular interactions underlying sperm crawling. Forms an extensive filament system that extends from sperm villipoda, along the leading edge of the pseudopod. This chain is Major sperm protein 78 (msp-78), found in Caenorhabditis elegans.